The sequence spans 1074 residues: Transmembrane protein 132E (1074 aa).

Positions 1-25 are cleaved as a signal peptide; the sequence is MAPGMSGRGGAALLCLSALLAHASG. The Extracellular portion of the chain corresponds to 26–893; it reads RSHPASPSPP…LTDLEIGMYA (868 aa). Residues asparagine 70 and asparagine 91 are each glycosylated (N-linked (GlcNAc...) asparagine). 2 disordered regions span residues 202–226 and 241–264; these read PPAP…ATGE and ASGG…ESPT. The span at 243 to 256 shows a compositional bias: gly residues; that stretch reads GGCGGSRRGAGPGV. N-linked (GlcNAc...) asparagine glycosylation is found at asparagine 318 and asparagine 399. Disordered regions lie at residues 563–585 and 814–867; these read RSVR…ASRG and GRDE…VPPT. Residues 841–862 show a composition bias toward low complexity; that stretch reads GAGPPGSALPAPEAPGPGTASP. A helical membrane pass occupies residues 894–914; the sequence is LLGVFCLAILVFLINCIVFVL. Topologically, residues 915 to 1074 are cytoplasmic; sequence RYRHKRIPPE…NYMRRIKEIA (160 aa). A disordered region spans residues 946–1063; it reads VQGELSPPAG…PTRPTAPPDL (118 aa). Low complexity predominate over residues 972-984; the sequence is SGSSQTSVQSQVH. A compositionally biased stretch (acidic residues) spans 1034–1044; that stretch reads GEEDEEEEEDL.

It belongs to the TMEM132 family.

The protein resides in the membrane. Required for normal inner ear hair cell function and hearing. The protein is Transmembrane protein 132E of Homo sapiens (Human).